Here is a 262-residue protein sequence, read N- to C-terminus: 3-methyl-2-oxobutanoate hydroxymethyltransferase (262 aa).

Mg(2+) is bound by residues Asp-31 and Asp-70. Residues 31 to 32 (DS), Asp-70, and Lys-99 contribute to the 3-methyl-2-oxobutanoate site. Glu-101 contributes to the Mg(2+) binding site. Glu-168 acts as the Proton acceptor in catalysis.

The protein belongs to the PanB family. Homodecamer; pentamer of dimers. Mg(2+) is required as a cofactor.

Its subcellular location is the cytoplasm. The catalysed reaction is 3-methyl-2-oxobutanoate + (6R)-5,10-methylene-5,6,7,8-tetrahydrofolate + H2O = 2-dehydropantoate + (6S)-5,6,7,8-tetrahydrofolate. Its pathway is cofactor biosynthesis; coenzyme A biosynthesis. Functionally, catalyzes the reversible reaction in which hydroxymethyl group from 5,10-methylenetetrahydrofolate is transferred onto alpha-ketoisovalerate to form ketopantoate. The chain is 3-methyl-2-oxobutanoate hydroxymethyltransferase from Cenarchaeum symbiosum (strain A).